A 578-amino-acid chain; its full sequence is DNA mismatch repair protein MutL (578 aa).

This sequence belongs to the DNA mismatch repair MutL/HexB family.

In terms of biological role, this protein is involved in the repair of mismatches in DNA. It is required for dam-dependent methyl-directed DNA mismatch repair. May act as a 'molecular matchmaker', a protein that promotes the formation of a stable complex between two or more DNA-binding proteins in an ATP-dependent manner without itself being part of a final effector complex. This Carboxydothermus hydrogenoformans (strain ATCC BAA-161 / DSM 6008 / Z-2901) protein is DNA mismatch repair protein MutL.